Here is a 248-residue protein sequence, read N- to C-terminus: uncharacterized protein (248 aa).

8-32 (IVTGAAQGIGQAYAQALAREGASVV) is an NADP(+) binding site. Ser143 is a substrate binding site. Residue Tyr153 is the Proton acceptor of the active site.

Belongs to the short-chain dehydrogenases/reductases (SDR) family.

This is an uncharacterized protein from Mycobacterium tuberculosis (strain CDC 1551 / Oshkosh).